The sequence spans 164 residues: Interferon gamma (164 aa).

An N-terminal signal peptide occupies residues 1–19 (MTCQTYNLFVLSVIMIYYG). N-linked (GlcNAc...) asparagine glycosylation is found at N42 and N61.

The protein belongs to the type II (or gamma) interferon family. Homodimer.

Its subcellular location is the secreted. Produced by lymphocytes activated by specific antigens or mitogens. IFN-gamma, in addition to having antiviral activity, has important immunoregulatory functions. It is a potent activator of macrophages, it has antiproliferative effects on transformed cells and it can potentiate the antiviral and antitumor effects of the type I interferons. The protein is Interferon gamma (IFNG) of Phasianus colchicus colchicus (Black-necked pheasant).